The sequence spans 361 residues: Probable mannose-1-phosphate guanylyltransferase 1 (361 aa).

GDP-alpha-D-mannose contacts are provided by leucine 6 and valine 7. 5 residues coordinate diphosphate: glycine 9, glycine 11, threonine 12, arginine 13, and lysine 23. GDP-alpha-D-mannose contacts are provided by glycine 85, asparagine 109, aspartate 111, glycine 146, and asparagine 173.

The protein belongs to the transferase hexapeptide repeat family.

The catalysed reaction is alpha-D-mannose 1-phosphate + GTP + H(+) = GDP-alpha-D-mannose + diphosphate. It functions in the pathway nucleotide-sugar biosynthesis; GDP-alpha-D-mannose biosynthesis; GDP-alpha-D-mannose from alpha-D-mannose 1-phosphate (GTP route): step 1/1. Functionally, catalyzes a reaction of the Smirnoff-Wheeler pathway, the major route to ascorbate biosynthesis in plants. This chain is Probable mannose-1-phosphate guanylyltransferase 1, found in Oryza sativa subsp. japonica (Rice).